Consider the following 65-residue polypeptide: Ferredoxin-1 (65 aa).

A 4Fe-4S ferredoxin-type domain is found at 3 to 31 (RKFYVDQDECIACESCVEIAPGAFAMDPE). [4Fe-4S] cluster contacts are provided by cysteine 12, cysteine 15, cysteine 18, and cysteine 55.

As to quaternary structure, homodimer. The cofactor is [4Fe-4S] cluster.

Ferredoxins are iron-sulfur proteins that transfer electrons in a wide variety of metabolic reactions. This Desulfocurvibacter africanus (Desulfovibrio africanus) protein is Ferredoxin-1 (fd1).